A 154-amino-acid chain; its full sequence is Large ribosomal subunit protein uL13 (154 aa).

This sequence belongs to the universal ribosomal protein uL13 family. In terms of assembly, part of the 50S ribosomal subunit.

Functionally, this protein is one of the early assembly proteins of the 50S ribosomal subunit, although it is not seen to bind rRNA by itself. It is important during the early stages of 50S assembly. This Brucella suis (strain ATCC 23445 / NCTC 10510) protein is Large ribosomal subunit protein uL13.